The chain runs to 107 residues: U1-lycotoxin-Ls1w (107 aa).

The first 20 residues, 1–20, serve as a signal peptide directing secretion; the sequence is MLKVLVVVALLVTLISYSSS. Residues 21 to 41 constitute a propeptide that is removed on maturation; that stretch reads EGIDDLEADELLSLMANEQTR. 4 disulfides stabilise this stretch: cysteine 44–cysteine 59, cysteine 51–cysteine 68, cysteine 58–cysteine 86, and cysteine 70–cysteine 84.

This sequence belongs to the neurotoxin 19 (CSTX) family. 04 (U1-Lctx) subfamily. In terms of tissue distribution, expressed by the venom gland.

It is found in the secreted. In Lycosa singoriensis (Wolf spider), this protein is U1-lycotoxin-Ls1w.